The chain runs to 180 residues: ATP synthase subunit delta (180 aa).

The protein belongs to the ATPase delta chain family. As to quaternary structure, F-type ATPases have 2 components, F(1) - the catalytic core - and F(0) - the membrane proton channel. F(1) has five subunits: alpha(3), beta(3), gamma(1), delta(1), epsilon(1). F(0) has three main subunits: a(1), b(2) and c(10-14). The alpha and beta chains form an alternating ring which encloses part of the gamma chain. F(1) is attached to F(0) by a central stalk formed by the gamma and epsilon chains, while a peripheral stalk is formed by the delta and b chains.

It is found in the cell membrane. In terms of biological role, f(1)F(0) ATP synthase produces ATP from ADP in the presence of a proton or sodium gradient. F-type ATPases consist of two structural domains, F(1) containing the extramembraneous catalytic core and F(0) containing the membrane proton channel, linked together by a central stalk and a peripheral stalk. During catalysis, ATP synthesis in the catalytic domain of F(1) is coupled via a rotary mechanism of the central stalk subunits to proton translocation. This protein is part of the stalk that links CF(0) to CF(1). It either transmits conformational changes from CF(0) to CF(1) or is implicated in proton conduction. The chain is ATP synthase subunit delta from Mycoplasma mobile (strain ATCC 43663 / 163K / NCTC 11711) (Mesomycoplasma mobile).